The sequence spans 620 residues: 1-deoxy-D-xylulose-5-phosphate synthase (620 aa).

Residues H80 and G121–S123 contribute to the thiamine diphosphate site. D152 lines the Mg(2+) pocket. Thiamine diphosphate contacts are provided by residues G153 to A154, N181, Y288, and E370. A Mg(2+)-binding site is contributed by N181.

This sequence belongs to the transketolase family. DXPS subfamily. As to quaternary structure, homodimer. Mg(2+) serves as cofactor. The cofactor is thiamine diphosphate.

The catalysed reaction is D-glyceraldehyde 3-phosphate + pyruvate + H(+) = 1-deoxy-D-xylulose 5-phosphate + CO2. Its pathway is metabolic intermediate biosynthesis; 1-deoxy-D-xylulose 5-phosphate biosynthesis; 1-deoxy-D-xylulose 5-phosphate from D-glyceraldehyde 3-phosphate and pyruvate: step 1/1. Functionally, catalyzes the acyloin condensation reaction between C atoms 2 and 3 of pyruvate and glyceraldehyde 3-phosphate to yield 1-deoxy-D-xylulose-5-phosphate (DXP). In Escherichia coli O6:K15:H31 (strain 536 / UPEC), this protein is 1-deoxy-D-xylulose-5-phosphate synthase.